Consider the following 653-residue polypeptide: Macrolide export ATP-binding/permease protein MacB (653 aa).

The 239-residue stretch at 6-244 (LQLTRVTRRF…DAAPDASGGA (239 aa)) folds into the ABC transporter domain. 42–49 (GASGSGKS) is an ATP binding site. The next 4 membrane-spanning stretches (helical) occupy residues 278 to 298 (LLTMLGIIIGITSVVSIVAIG), 526 to 546 (LTLLLSLIAVISLVVGGIGVM), 587 to 607 (MGGAIGIVLSFGMSFVFSLFV), and 616 to 636 (AASIASAFLCSTLIGVVFGFM).

This sequence belongs to the ABC transporter superfamily. Macrolide exporter (TC 3.A.1.122) family. Homodimer.

It localises to the cell inner membrane. In terms of biological role, non-canonical ABC transporter that contains transmembrane domains (TMD), which form a pore in the inner membrane, and an ATP-binding domain (NBD), which is responsible for energy generation. Confers resistance against macrolides. This is Macrolide export ATP-binding/permease protein MacB from Burkholderia pseudomallei (strain 1710b).